The sequence spans 245 residues: tRNA (guanine-N(1)-)-methyltransferase (245 aa).

S-adenosyl-L-methionine-binding positions include Gly-111 and 131-136 (MGDYVL).

This sequence belongs to the RNA methyltransferase TrmD family. In terms of assembly, homodimer.

It is found in the cytoplasm. The catalysed reaction is guanosine(37) in tRNA + S-adenosyl-L-methionine = N(1)-methylguanosine(37) in tRNA + S-adenosyl-L-homocysteine + H(+). Its function is as follows. Specifically methylates guanosine-37 in various tRNAs. The chain is tRNA (guanine-N(1)-)-methyltransferase from Staphylococcus epidermidis (strain ATCC 35984 / DSM 28319 / BCRC 17069 / CCUG 31568 / BM 3577 / RP62A).